Reading from the N-terminus, the 500-residue chain is Xylan O-acetyltransferase 2 (500 aa).

Residues 1 to 25 (MGLPGRRNPLLSARRAAASLRRSRR) are Cytoplasmic-facing. Residues 26–43 (LPVYVAAVFFVASVLLMF) traverse the membrane as a helical; Signal-anchor for type II membrane protein segment. The Lumenal portion of the chain corresponds to 44 to 500 (RDEILYLTTA…RPPAAAGHVA (457 aa)). Residues 84–116 (PVLLGHGGKPEKHHSVTERHRPKVSAKRRPNKK) are disordered. Over residues 91 to 102 (GKPEKHHSVTER) the composition is skewed to basic and acidic residues. Residues 103–116 (HRPKVSAKRRPNKK) show a composition bias toward basic residues. 4 cysteine pairs are disulfide-bonded: C143–C194, C165–C231, C174–C472, and C388–C468. N-linked (GlcNAc...) asparagine glycans are attached at residues N144 and N154. The short motif at 218–220 (GDS) is the GDS motif element. The active-site Nucleophile is S220. 2 N-linked (GlcNAc...) asparagine glycosylation sites follow: N260 and N416. D467 (proton donor) is an active-site residue. Positions 467 to 470 (DCIH) match the DXXH motif motif. The Proton acceptor role is filled by H470.

It belongs to the PC-esterase family. TBL subfamily. As to expression, expressed at low levels in roots and leaves.

The protein resides in the golgi apparatus membrane. Functionally, xylan acetyltransferase required for 2-O- and 3-O-monoacetylation of xylosyl residues in xylan. Catalyzes the 2-O-acetylation of xylan, followed by nonenzymatic acetyl migration to the O-3 position, resulting in products that are monoacetylated at both O-2 and O-3 positions. In Oryza sativa subsp. japonica (Rice), this protein is Xylan O-acetyltransferase 2.